We begin with the raw amino-acid sequence, 68 residues long: KDGYLVNKSTGCKYSCIENINDSHCNEECISSIRKGSYGYCYKFYCYCIGMPDSTQVYPIPGKTCSTE.

In terms of domain architecture, LCN-type CS-alpha/beta spans 1–66; that stretch reads KDGYLVNKST…VYPIPGKTCS (66 aa). Disulfide bonds link Cys-12/Cys-65, Cys-16/Cys-41, Cys-25/Cys-46, and Cys-29/Cys-48.

Belongs to the long (4 C-C) scorpion toxin superfamily. Sodium channel inhibitor family. In terms of tissue distribution, expressed by the venom gland.

The protein localises to the secreted. Functionally, binds to sodium channels (Nav) and inhibits them. The polypeptide is Toxin Cg2 (Centruroides gracilis (Slenderbrown scorpion)).